The sequence spans 631 residues: VPS9 domain-containing protein 1 (631 aa).

A Phosphoserine modification is found at serine 116. The stretch at 187–221 (RQMMENLVIAKAREETLQRKMEERRLRLQEAANRR) forms a coiled coil. The tract at residues 318 to 379 (PNPGSRRLRP…ASGLPDKDSS (62 aa)) is disordered. Residues 337–362 (PPEPSAAPRPQDSPPTPPLQPGPVGS) are compositionally biased toward pro residues. The VPS9 domain maps to 467 to 630 (RAREAALSRS…VELLPRGGLA (164 aa)).

Ubiquitous.

This Homo sapiens (Human) protein is VPS9 domain-containing protein 1 (VPS9D1).